A 195-amino-acid chain; its full sequence is Phosphoheptose isomerase (195 aa).

One can recognise an SIS domain in the interval 36 to 195 (LAHCLLSDGK…DLVDHQLFGE (160 aa)). 51 to 53 (NGG) lines the substrate pocket. Positions 60 and 64 each coordinate Zn(2+). Residues glutamate 64, 93-94 (ND), 119-121 (STS), serine 124, and glutamine 174 each bind substrate. Glutamine 174 and histidine 182 together coordinate Zn(2+).

The protein belongs to the SIS family. GmhA subfamily. As to quaternary structure, homotetramer. Zn(2+) is required as a cofactor.

The protein resides in the cytoplasm. The enzyme catalyses 2 D-sedoheptulose 7-phosphate = D-glycero-alpha-D-manno-heptose 7-phosphate + D-glycero-beta-D-manno-heptose 7-phosphate. It functions in the pathway carbohydrate biosynthesis; D-glycero-D-manno-heptose 7-phosphate biosynthesis; D-glycero-alpha-D-manno-heptose 7-phosphate and D-glycero-beta-D-manno-heptose 7-phosphate from sedoheptulose 7-phosphate: step 1/1. Its function is as follows. Catalyzes the isomerization of sedoheptulose 7-phosphate in D-glycero-D-manno-heptose 7-phosphate. This Methylococcus capsulatus (strain ATCC 33009 / NCIMB 11132 / Bath) protein is Phosphoheptose isomerase.